The sequence spans 319 residues: Ferrochelatase (319 aa).

Fe cation is bound by residues His-193 and Glu-274.

This sequence belongs to the ferrochelatase family.

Its subcellular location is the cytoplasm. It catalyses the reaction heme b + 2 H(+) = protoporphyrin IX + Fe(2+). Its pathway is porphyrin-containing compound metabolism; protoheme biosynthesis; protoheme from protoporphyrin-IX: step 1/1. Catalyzes the ferrous insertion into protoporphyrin IX. This chain is Ferrochelatase, found in Actinobacillus pleuropneumoniae serotype 5b (strain L20).